The chain runs to 317 residues: Melanocyte-stimulating hormone receptor (317 aa).

The Extracellular portion of the chain corresponds to 1 to 37 (MPMQGAQRKLLGSLNSTPTATSNLGLAANHTGAPCLE). Asparagine 29 carries an N-linked (GlcNAc...) asparagine glycan. The chain crosses the membrane as a helical span at residues 38–63 (VSIPDGLFLSLGLVSLVENVLVVAAI). The Cytoplasmic segment spans residues 64–72 (AKNRNLHSS). Residues 73–93 (MYCFICCLALSDLLVSGSNML) form a helical membrane-spanning segment. Residues 94 to 118 (ETAVILLLEAGALATRTSAVQRLHN) lie on the Extracellular side of the membrane. The helical transmembrane segment at 119 to 140 (TIDVLTCSSMLCSLCFLGAIAV) threads the bilayer. Residues 141–163 (DRYISIFYALRYHSIVTLPRTQR) are Cytoplasmic-facing. Residues 164–183 (VIAAIWVASVLSSTLFITYY) traverse the membrane as a helical segment. The Extracellular portion of the chain corresponds to 184–191 (DHAAVLLC). Residues 192-211 (LVVFFLAMLVLMAVLYVHML) traverse the membrane as a helical segment. Residues 212 to 240 (ARACQHAHGIIRLHKRQSPAHQGFGLRGA) are Cytoplasmic-facing. A helical membrane pass occupies residues 241 to 266 (ATLTILLGIFFLCWGPFFLHLTLVVF). Residues 267-279 (CPQHLTCSCIFKN) are Extracellular-facing. The chain crosses the membrane as a helical span at residues 280 to 300 (FKVFLTLIICNTIIDPLIYAF). Topologically, residues 301–317 (RSQELRRTLKEVLLCSW) are cytoplasmic. Residue cysteine 315 is the site of S-palmitoyl cysteine attachment.

The protein belongs to the G-protein coupled receptor 1 family. As to quaternary structure, interacts with MGRN1, but does not undergo MGRN1-mediated ubiquitination; this interaction competes with GNAS-binding and thus inhibits agonist-induced cAMP production. Interacts with OPN3; the interaction results in a decrease in MC1R-mediated cAMP signaling and ultimately a decrease in melanin production in melanocytes.

Its subcellular location is the cell membrane. Functionally, receptor for MSH (alpha, beta and gamma) and ACTH. The activity of this receptor is mediated by G proteins which activate adenylate cyclase. Mediates melanogenesis, the production of eumelanin (black/brown) and phaeomelanin (red/yellow), via regulation of cAMP signaling in melanocytes. The protein is Melanocyte-stimulating hormone receptor (MC1R) of Saguinus imperator (Emperor tamarin).